Consider the following 238-residue polypeptide: Aspartate/glutamate leucyltransferase (238 aa).

It belongs to the R-transferase family. Bpt subfamily.

It is found in the cytoplasm. It catalyses the reaction N-terminal L-glutamyl-[protein] + L-leucyl-tRNA(Leu) = N-terminal L-leucyl-L-glutamyl-[protein] + tRNA(Leu) + H(+). It carries out the reaction N-terminal L-aspartyl-[protein] + L-leucyl-tRNA(Leu) = N-terminal L-leucyl-L-aspartyl-[protein] + tRNA(Leu) + H(+). Its function is as follows. Functions in the N-end rule pathway of protein degradation where it conjugates Leu from its aminoacyl-tRNA to the N-termini of proteins containing an N-terminal aspartate or glutamate. In Shewanella sp. (strain MR-7), this protein is Aspartate/glutamate leucyltransferase.